The primary structure comprises 457 residues: MFIVSRLKDLTIITNRLRHYFRNMDVKELQPPSSVRGMQELQREQFRKIVQVPRLRVPESQVQRVMPLVKKFLLKMEHLHPVRAVDQSREILLHPTPVKNWDSLPTEDLQRQKVNAENFSFADLELRYENWSANEILKSVLPTEEEGLTSYSRIGHIAHLNLRDHLLPYKQLIGQVLRDKLPNCRTVVNKASSIDNTYRNFQLELICGDPDYQVETKENGVPFEFDFSKVYWNPRLSTEHERIVKMLKSDDVLYDVFAGVGPFSIPAAKKRCHVLANDLNPESFRWLQHNAKRNKCLPNIKMSNKDGRQFIVEELREDLLKRLCTTDTTTYGIHITMNLPAMAVEFLDAFRGLYSADELAQLPTNVCYPTVHVYSFAKGENTKELVRQLVESNLGASLDENLLQGINFVRNVAPNKDMYRVSFKLSLNMLTTLKEVEVTRKRYAEEELEVATKVKCV.

S-adenosyl-L-methionine is bound by residues His240, 278 to 279 (DL), 306 to 307 (DG), and Asn338.

The protein belongs to the class I-like SAM-binding methyltransferase superfamily. TRM5/TYW2 family. As to quaternary structure, monomer.

It localises to the mitochondrion matrix. It is found in the nucleus. Its subcellular location is the cytoplasm. It catalyses the reaction guanosine(37) in tRNA + S-adenosyl-L-methionine = N(1)-methylguanosine(37) in tRNA + S-adenosyl-L-homocysteine + H(+). Functionally, specifically methylates the N1 position of guanosine-37 in various cytoplasmic and mitochondrial tRNAs. Methylation is not dependent on the nature of the nucleoside 5' of the target nucleoside. This is the first step in the biosynthesis of wybutosine (yW), a modified base adjacent to the anticodon of tRNAs and required for accurate decoding. This chain is tRNA (guanine(37)-N(1))-methyltransferase, found in Drosophila melanogaster (Fruit fly).